The following is a 251-amino-acid chain: Eukaryotic translation initiation factor 4E-3 (251 aa).

Residues 200 to 251 (DSSARTSSTVKPRICLPAKDPAPVKEKGPAATTSPSNPGTEATGTSPATPTP) are disordered. A compositionally biased stretch (polar residues) spans 230–251 (ATTSPSNPGTEATGTSPATPTP).

This sequence belongs to the eukaryotic initiation factor 4E family. As to quaternary structure, eIF4F is a multi-subunit complex, the composition of which varies with external and internal environmental conditions. It is composed of at least eIF4A, eIF4E and eIF4G. eIF4E is also known to interact with other partners. Interacts with mxt. Component of the pid-1 variant of the PETISCO complex (also called the pid-3, erh-2, tofu-6, and ife-3 small RNA complex) containing at least pid-1, tofu-6, ife-3, pid-3, and erh-2, which is required for the biogenesis of a class of 21 nucleotide PIWI-interacting RNAs (piRNAs) that possess a uracil residue at the 5'-end (also called 21U-RNAs). Component of the tost-1 variant of the PETISCO complex (also called the pid-3, erh-2, tofu-6, and ife-3 small RNA complex) containing at least tost-1, tofu-6, ife-3, pid-3, and erh-2, which plays an essential role in embryogenesis. Within the pid-1 and tost-1 variants of the PETISCO complexes interacts with tofu-6 (via C-terminus). In contrast to the pid-1 variant of the PETISCO complex, the tost-1 variant of the PETISCO complex plays a minor role in the biogenesis of 21U-RNAs. As to expression, highly expressed in the germline (at protein level).

It is found in the cytoplasmic granule. It localises to the cytoplasm. The protein localises to the perinuclear region. Recognizes and binds the 7-methylguanosine-containing mRNA cap during an early step in the initiation of protein synthesis and facilitates ribosome binding by inducing the unwinding of the mRNAs secondary structures. All 5 eIF4E proteins bind monomethyl cap structures. Only ife-1, ife-2 and ife-5 bind trimethyl cap structures which result from trans-splicing. Translation of trimethyl cap structure mRNAs may be regulated by intracellular redox state; disulfide bonds change the width and depth of the cap-binding cavity determining selectivity to mRNA caps. Ife-3 is essential for viability. Component of the pid-1 and tost-1 variants of the PETISCO complexes, which have roles in the biogenesis of a class of 21 nucleotide PIWI-interacting RNAs (piRNAs) that possess a uracil residue at the 5'-end (also called 21U-RNAs) and embryogenesis, respectively. Within the pid-1 variant of the PETISCO complex binds to capped 21U-RNA precursor molecules, possibly playing a role in the processing of the 5' end of the molecules to promote binding of other complex components such as pid-3. However, it is not essential for the biogenesis of 21U-RNAs by itself. Within the tost-1 variant of the PETISCO complex binds to splice leader SL1 RNA fragments to possibly play a role in their processing. In Caenorhabditis elegans, this protein is Eukaryotic translation initiation factor 4E-3.